Here is a 62-residue protein sequence, read N- to C-terminus: Cytotoxin 11 (62 aa).

4 disulfide bridges follow: Cys-3–Cys-22, Cys-15–Cys-40, Cys-44–Cys-55, and Cys-56–Cys-61.

It belongs to the three-finger toxin family. Short-chain subfamily. Orphan group XV sub-subfamily. Expressed by the venom gland.

It is found in the secreted. The protein localises to the target cell membrane. In terms of biological role, has low cytotoxic activity. The sequence is that of Cytotoxin 11 from Naja annulifera (Banded Egyptian cobra).